We begin with the raw amino-acid sequence, 279 residues long: Large ribosomal subunit protein uL2 (279 aa).

Disordered stretches follow at residues 1-59 (MGIR…GGHK) and 224-279 (VAMN…KNKR). Positions 50–59 (TTRHKGGGHK) are enriched in basic residues. The segment covering 253–268 (REGRTRRPNKESDKLI) has biased composition (basic and acidic residues). The span at 269 to 279 (VRRRRTGKNKR) shows a compositional bias: basic residues.

It belongs to the universal ribosomal protein uL2 family. In terms of assembly, part of the 50S ribosomal subunit. Forms a bridge to the 30S subunit in the 70S ribosome.

Its function is as follows. One of the primary rRNA binding proteins. Required for association of the 30S and 50S subunits to form the 70S ribosome, for tRNA binding and peptide bond formation. It has been suggested to have peptidyltransferase activity; this is somewhat controversial. Makes several contacts with the 16S rRNA in the 70S ribosome. The sequence is that of Large ribosomal subunit protein uL2 from Pseudarthrobacter chlorophenolicus (strain ATCC 700700 / DSM 12829 / CIP 107037 / JCM 12360 / KCTC 9906 / NCIMB 13794 / A6) (Arthrobacter chlorophenolicus).